Reading from the N-terminus, the 608-residue chain is 1-deoxy-D-xylulose-5-phosphate synthase (608 aa).

Thiamine diphosphate-binding positions include H66 and 107 to 109; that span reads GHA. Mg(2+) is bound at residue D138. Thiamine diphosphate contacts are provided by residues 139-140, N167, F277, and E350; that span reads GA. A Mg(2+)-binding site is contributed by N167.

Belongs to the transketolase family. DXPS subfamily. In terms of assembly, homodimer. It depends on Mg(2+) as a cofactor. The cofactor is thiamine diphosphate.

It carries out the reaction D-glyceraldehyde 3-phosphate + pyruvate + H(+) = 1-deoxy-D-xylulose 5-phosphate + CO2. The protein operates within metabolic intermediate biosynthesis; 1-deoxy-D-xylulose 5-phosphate biosynthesis; 1-deoxy-D-xylulose 5-phosphate from D-glyceraldehyde 3-phosphate and pyruvate: step 1/1. Its function is as follows. Catalyzes the acyloin condensation reaction between C atoms 2 and 3 of pyruvate and glyceraldehyde 3-phosphate to yield 1-deoxy-D-xylulose-5-phosphate (DXP). The chain is 1-deoxy-D-xylulose-5-phosphate synthase from Thermotoga petrophila (strain ATCC BAA-488 / DSM 13995 / JCM 10881 / RKU-1).